The following is a 122-amino-acid chain: Immunoglobulin lambda variable 4-3 (122 aa).

A signal peptide spans 1-19 (MAWVSFYLLPFIFSTGLCA). The segment at 20-44 (LPVLTQPPSASALLGASIKLTCTLS) is framework-1. Residues 21 to 122 (PVLTQPPSAS…ESHTIDGQVG (102 aa)) form the Ig-like domain. Cys41 and Cys111 are disulfide-bonded. The tract at residues 45 to 51 (SEHSTYT) is complementarity-determining-1. Positions 52–68 (IEWYQQRPGRSPQYIMK) are framework-2. Residues 69–75 (VKSDGSH) are complementarity-determining-2. The framework-3 stretch occupies residues 76 to 111 (SKGDGIPDRFMGSSSGADRYLTFSNLQSDDEAEYHC). The complementarity-determining-3 stretch occupies residues 112-122 (GESHTIDGQVG).

As to quaternary structure, immunoglobulins are composed of two identical heavy chains and two identical light chains; disulfide-linked.

The protein resides in the secreted. Its subcellular location is the cell membrane. Functionally, v region of the variable domain of immunoglobulin light chains that participates in the antigen recognition. Immunoglobulins, also known as antibodies, are membrane-bound or secreted glycoproteins produced by B lymphocytes. In the recognition phase of humoral immunity, the membrane-bound immunoglobulins serve as receptors which, upon binding of a specific antigen, trigger the clonal expansion and differentiation of B lymphocytes into immunoglobulins-secreting plasma cells. Secreted immunoglobulins mediate the effector phase of humoral immunity, which results in the elimination of bound antigens. The antigen binding site is formed by the variable domain of one heavy chain, together with that of its associated light chain. Thus, each immunoglobulin has two antigen binding sites with remarkable affinity for a particular antigen. The variable domains are assembled by a process called V-(D)-J rearrangement and can then be subjected to somatic hypermutations which, after exposure to antigen and selection, allow affinity maturation for a particular antigen. This chain is Immunoglobulin lambda variable 4-3, found in Homo sapiens (Human).